Here is an 80-residue protein sequence, read N- to C-terminus: Putative membrane protein insertion efficiency factor (80 aa).

The interval 61 to 80 (KTGKDPIPDHFSLKRNQEGE) is disordered. Over residues 62-80 (TGKDPIPDHFSLKRNQEGE) the composition is skewed to basic and acidic residues.

The protein belongs to the UPF0161 family.

It is found in the cell membrane. Its function is as follows. Could be involved in insertion of integral membrane proteins into the membrane. The polypeptide is Putative membrane protein insertion efficiency factor (Streptococcus pneumoniae (strain CGSP14)).